Here is a 367-residue protein sequence, read N- to C-terminus: Homoserine O-acetyltransferase (367 aa).

Positions 44 to 350 (NVIMVEHAWT…AYGHDAFLLE (307 aa)) constitute an AB hydrolase-1 domain. Residue Ser-150 is the Nucleophile of the active site. Arg-217 is a binding site for substrate. Active-site residues include Asp-311 and His-344. Asp-345 is a substrate binding site.

It belongs to the AB hydrolase superfamily. MetX family. In terms of assembly, homodimer.

The protein localises to the cytoplasm. It catalyses the reaction L-homoserine + acetyl-CoA = O-acetyl-L-homoserine + CoA. It functions in the pathway amino-acid biosynthesis; L-methionine biosynthesis via de novo pathway; O-acetyl-L-homoserine from L-homoserine: step 1/1. Its function is as follows. Transfers an acetyl group from acetyl-CoA to L-homoserine, forming acetyl-L-homoserine. In vitro, can also use propionyl-CoA or butiryl-CoA as acyl donor. The chain is Homoserine O-acetyltransferase from Trichlorobacter lovleyi (strain ATCC BAA-1151 / DSM 17278 / SZ) (Geobacter lovleyi).